A 255-amino-acid polypeptide reads, in one-letter code: Imidazole glycerol phosphate synthase subunit HisF (255 aa).

Active-site residues include D12 and D131.

It belongs to the HisA/HisF family. Heterodimer of HisH and HisF.

It localises to the cytoplasm. The catalysed reaction is 5-[(5-phospho-1-deoxy-D-ribulos-1-ylimino)methylamino]-1-(5-phospho-beta-D-ribosyl)imidazole-4-carboxamide + L-glutamine = D-erythro-1-(imidazol-4-yl)glycerol 3-phosphate + 5-amino-1-(5-phospho-beta-D-ribosyl)imidazole-4-carboxamide + L-glutamate + H(+). It functions in the pathway amino-acid biosynthesis; L-histidine biosynthesis; L-histidine from 5-phospho-alpha-D-ribose 1-diphosphate: step 5/9. Functionally, IGPS catalyzes the conversion of PRFAR and glutamine to IGP, AICAR and glutamate. The HisF subunit catalyzes the cyclization activity that produces IGP and AICAR from PRFAR using the ammonia provided by the HisH subunit. In Sphingopyxis alaskensis (strain DSM 13593 / LMG 18877 / RB2256) (Sphingomonas alaskensis), this protein is Imidazole glycerol phosphate synthase subunit HisF.